The chain runs to 305 residues: Leucine-rich repeat-containing protein 25 (305 aa).

The N-terminal stretch at 1 to 20 (MGGTLAWTLLLPLLLRESDS) is a signal peptide. The Extracellular segment spans residues 21-165 (LEPSCTVSSA…SCAPGLASAT (145 aa)). LRR repeat units follow at residues 39 to 59 (SATC…QSLR), 62 to 83 (NVIL…FFAH), and 86 to 107 (KLEV…LAAR). Residues Asn44 and Asn55 are each glycosylated (N-linked (GlcNAc...) asparagine). 2 N-linked (GlcNAc...) asparagine glycosylation sites follow: Asn130 and Asn148. The helical transmembrane segment at 166–186 (IGAVVVSGCLLLGLAIAGPVL) threads the bilayer. Residues 187–305 (AWRLWRCRVA…DEEEYVIPGH (119 aa)) are Cytoplasmic-facing. The interval 204–229 (PWAAQDGPKPGLGLQPRYGSRSAPKP) is disordered. Tyr284 carries the phosphotyrosine modification.

Interacts with RIGI. Interacts with SQSTM1. Interacts with p65/RELA; this interaction promotes the degradation of RELA through autophagy. As to expression, expressed in plasmacytoid dendritic cells (PDC), monocyte-derived dendritic cells (MDDC), granulocytes, monocytes, B-lymphocytes, peripheral blood leukocytes, spleen, bone marrow, and, to a lesser extent, lymph nodes, fetal liver, and appendix but not in thymus.

Its subcellular location is the membrane. It is found in the cytoplasm. Its function is as follows. Plays a role in the inhibition of RLR-mediated type I interferon signaling pathway by targeting RIGI for autophagic degradation. Interacts specifically with ISG15-associated RIGI to promote interaction between RIGI and the autophagic cargo receptor p62/SQSTM1 to mediate RIGI degradation via selective autophagy. Also plays a role in the inhibition of NF-kappa-B signaling pathway and inflammatory response by promoting the degradation of p65/RELA. The sequence is that of Leucine-rich repeat-containing protein 25 (LRRC25) from Homo sapiens (Human).